The following is a 268-amino-acid chain: Ribosomal RNA small subunit methyltransferase A (268 aa).

S-adenosyl-L-methionine contacts are provided by Asn23, Ile25, Gly50, Glu72, Asp97, and Asn116.

The protein belongs to the class I-like SAM-binding methyltransferase superfamily. rRNA adenine N(6)-methyltransferase family. RsmA subfamily.

It is found in the cytoplasm. It carries out the reaction adenosine(1518)/adenosine(1519) in 16S rRNA + 4 S-adenosyl-L-methionine = N(6)-dimethyladenosine(1518)/N(6)-dimethyladenosine(1519) in 16S rRNA + 4 S-adenosyl-L-homocysteine + 4 H(+). Functionally, specifically dimethylates two adjacent adenosines (A1518 and A1519) in the loop of a conserved hairpin near the 3'-end of 16S rRNA in the 30S particle. May play a critical role in biogenesis of 30S subunits. In Rickettsia prowazekii (strain Madrid E), this protein is Ribosomal RNA small subunit methyltransferase A.